A 312-amino-acid polypeptide reads, in one-letter code: DNA-directed RNA polymerase subunit alpha (312 aa).

Residues 1-226 (MIEFKKPNIT…EHFKAFESAD (226 aa)) are alpha N-terminal domain (alpha-NTD). The segment at 243–312 (KEKKLEMTIE…DLGLSLRQED (70 aa)) is alpha C-terminal domain (alpha-CTD).

It belongs to the RNA polymerase alpha chain family. In terms of assembly, homodimer. The RNAP catalytic core consists of 2 alpha, 1 beta, 1 beta' and 1 omega subunit. When a sigma factor is associated with the core the holoenzyme is formed, which can initiate transcription.

It carries out the reaction RNA(n) + a ribonucleoside 5'-triphosphate = RNA(n+1) + diphosphate. DNA-dependent RNA polymerase catalyzes the transcription of DNA into RNA using the four ribonucleoside triphosphates as substrates. The polypeptide is DNA-directed RNA polymerase subunit alpha (Lactobacillus delbrueckii subsp. bulgaricus (strain ATCC BAA-365 / Lb-18)).